The chain runs to 620 residues: Dihydroxy-acid dehydratase (620 aa).

Residue aspartate 81 participates in Mg(2+) binding. A [2Fe-2S] cluster-binding site is contributed by cysteine 122. The Mg(2+) site is built by aspartate 123 and lysine 124. Lysine 124 carries the post-translational modification N6-carboxylysine. Cysteine 195 is a [2Fe-2S] cluster binding site. Glutamate 491 is a binding site for Mg(2+). The Proton acceptor role is filled by serine 517.

It belongs to the IlvD/Edd family. In terms of assembly, homodimer. Requires [2Fe-2S] cluster as cofactor. Mg(2+) is required as a cofactor.

The enzyme catalyses (2R)-2,3-dihydroxy-3-methylbutanoate = 3-methyl-2-oxobutanoate + H2O. The catalysed reaction is (2R,3R)-2,3-dihydroxy-3-methylpentanoate = (S)-3-methyl-2-oxopentanoate + H2O. It functions in the pathway amino-acid biosynthesis; L-isoleucine biosynthesis; L-isoleucine from 2-oxobutanoate: step 3/4. Its pathway is amino-acid biosynthesis; L-valine biosynthesis; L-valine from pyruvate: step 3/4. In terms of biological role, functions in the biosynthesis of branched-chain amino acids. Catalyzes the dehydration of (2R,3R)-2,3-dihydroxy-3-methylpentanoate (2,3-dihydroxy-3-methylvalerate) into 2-oxo-3-methylpentanoate (2-oxo-3-methylvalerate) and of (2R)-2,3-dihydroxy-3-methylbutanoate (2,3-dihydroxyisovalerate) into 2-oxo-3-methylbutanoate (2-oxoisovalerate), the penultimate precursor to L-isoleucine and L-valine, respectively. This Colwellia psychrerythraea (strain 34H / ATCC BAA-681) (Vibrio psychroerythus) protein is Dihydroxy-acid dehydratase.